The chain runs to 732 residues: Elongation factor 2 (732 aa).

Positions 19–260 constitute a tr-type G domain; the sequence is ERIRNIGIAA…MVVKHLPNPI (242 aa). GTP-binding positions include 28 to 35, 94 to 98, and 148 to 151; these read AHIDHGKT, DTPGH, and NKVD. At His597 the chain carries Diphthamide.

This sequence belongs to the TRAFAC class translation factor GTPase superfamily. Classic translation factor GTPase family. EF-G/EF-2 subfamily.

It localises to the cytoplasm. Its function is as follows. Catalyzes the GTP-dependent ribosomal translocation step during translation elongation. During this step, the ribosome changes from the pre-translocational (PRE) to the post-translocational (POST) state as the newly formed A-site-bound peptidyl-tRNA and P-site-bound deacylated tRNA move to the P and E sites, respectively. Catalyzes the coordinated movement of the two tRNA molecules, the mRNA and conformational changes in the ribosome. The polypeptide is Elongation factor 2 (fusA) (Pyrococcus abyssi (strain GE5 / Orsay)).